Reading from the N-terminus, the 207-residue chain is Outer-membrane lipoprotein LolB (207 aa).

The first 23 residues, 1 to 23 (MINLRRFTKFTLAGLTALSLLGG), serve as a signal peptide directing secretion. Cysteine 24 carries the N-palmitoyl cysteine lipid modification. Cysteine 24 carries the S-diacylglycerol cysteine lipid modification.

It belongs to the LolB family. Monomer.

The protein localises to the cell outer membrane. Functionally, plays a critical role in the incorporation of lipoproteins in the outer membrane after they are released by the LolA protein. This is Outer-membrane lipoprotein LolB from Shewanella amazonensis (strain ATCC BAA-1098 / SB2B).